Consider the following 95-residue polypeptide: uncharacterized protein (95 aa).

The tract at residues 1–64 (MEIDDIFASK…PKGASGRKRT (64 aa)) is disordered. A compositionally biased stretch (basic and acidic residues) spans 18 to 28 (KSNDSKSEAKA). Residues 35–49 (TKSTPSRPKPTNNQD) show a composition bias toward polar residues.

This is an uncharacterized protein from Schizosaccharomyces pombe (strain 972 / ATCC 24843) (Fission yeast).